Consider the following 1196-residue polypeptide: DNA-directed RNA polymerase subunit beta (1196 aa).

The protein belongs to the RNA polymerase beta chain family. In terms of assembly, the RNAP catalytic core consists of 2 alpha, 1 beta, 1 beta' and 1 omega subunit. When a sigma factor is associated with the core the holoenzyme is formed, which can initiate transcription.

It catalyses the reaction RNA(n) + a ribonucleoside 5'-triphosphate = RNA(n+1) + diphosphate. In terms of biological role, DNA-dependent RNA polymerase catalyzes the transcription of DNA into RNA using the four ribonucleoside triphosphates as substrates. In Lactococcus lactis subsp. cremoris (strain SK11), this protein is DNA-directed RNA polymerase subunit beta.